Reading from the N-terminus, the 510-residue chain is NAD(P)H-quinone oxidoreductase subunit 2, chloroplastic (510 aa).

The next 11 helical transmembrane spans lie at 24 to 44 (LLLF…GLIL), 59 to 79 (WFYF…LFRW), 99 to 119 (IFQF…VEYI), 124 to 144 (MAIT…MFLC), 149 to 169 (LITI…LSGY), 183 to 203 (YLLM…WLYG), 295 to 315 (WHLL…LIAI), 323 to 343 (MLAY…IVGD), 347 to 367 (GYAS…GTFA), 395 to 415 (ALSS…AGFF), and 418 to 438 (LHLF…IGLL).

This sequence belongs to the complex I subunit 2 family. As to quaternary structure, NDH is composed of at least 16 different subunits, 5 of which are encoded in the nucleus.

The protein localises to the plastid. Its subcellular location is the chloroplast thylakoid membrane. The catalysed reaction is a plastoquinone + NADH + (n+1) H(+)(in) = a plastoquinol + NAD(+) + n H(+)(out). It carries out the reaction a plastoquinone + NADPH + (n+1) H(+)(in) = a plastoquinol + NADP(+) + n H(+)(out). In terms of biological role, NDH shuttles electrons from NAD(P)H:plastoquinone, via FMN and iron-sulfur (Fe-S) centers, to quinones in the photosynthetic chain and possibly in a chloroplast respiratory chain. The immediate electron acceptor for the enzyme in this species is believed to be plastoquinone. Couples the redox reaction to proton translocation, and thus conserves the redox energy in a proton gradient. This is NAD(P)H-quinone oxidoreductase subunit 2, chloroplastic from Maianthemum racemosum (False Solomon's-seal).